A 132-amino-acid polypeptide reads, in one-letter code: Small ribosomal subunit protein uS8 (132 aa).

Belongs to the universal ribosomal protein uS8 family. In terms of assembly, part of the 30S ribosomal subunit. Contacts proteins S5 and S12.

In terms of biological role, one of the primary rRNA binding proteins, it binds directly to 16S rRNA central domain where it helps coordinate assembly of the platform of the 30S subunit. In Natranaerobius thermophilus (strain ATCC BAA-1301 / DSM 18059 / JW/NM-WN-LF), this protein is Small ribosomal subunit protein uS8.